Consider the following 393-residue polypeptide: Chorismate synthase (393 aa).

2 residues coordinate NADP(+): Arg-39 and Arg-45. FMN is bound by residues 133–135, 256–257, Gly-301, 316–320, and Arg-342; these read RSS, NA, and KPIPT.

Belongs to the chorismate synthase family. Homotetramer. FMNH2 is required as a cofactor.

The enzyme catalyses 5-O-(1-carboxyvinyl)-3-phosphoshikimate = chorismate + phosphate. The protein operates within metabolic intermediate biosynthesis; chorismate biosynthesis; chorismate from D-erythrose 4-phosphate and phosphoenolpyruvate: step 7/7. In terms of biological role, catalyzes the anti-1,4-elimination of the C-3 phosphate and the C-6 proR hydrogen from 5-enolpyruvylshikimate-3-phosphate (EPSP) to yield chorismate, which is the branch point compound that serves as the starting substrate for the three terminal pathways of aromatic amino acid biosynthesis. This reaction introduces a second double bond into the aromatic ring system. This Lysinibacillus sphaericus (strain C3-41) protein is Chorismate synthase.